We begin with the raw amino-acid sequence, 151 residues long: FAD synthase (151 aa).

Residues 9–10 (TF), 14–17 (HPGH), Asp-96, and Tyr-123 contribute to the ATP site.

It belongs to the archaeal FAD synthase family. Homodimer. A divalent metal cation is required as a cofactor.

The enzyme catalyses FMN + ATP + H(+) = FAD + diphosphate. The protein operates within cofactor biosynthesis; FAD biosynthesis; FAD from FMN: step 1/1. Its function is as follows. Catalyzes the transfer of the AMP portion of ATP to flavin mononucleotide (FMN) to produce flavin adenine dinucleotide (FAD) coenzyme. In Methanothermobacter thermautotrophicus (strain ATCC 29096 / DSM 1053 / JCM 10044 / NBRC 100330 / Delta H) (Methanobacterium thermoautotrophicum), this protein is FAD synthase.